The chain runs to 727 residues: Capsid protein VP1 (727 aa).

A compositionally biased stretch (basic residues) spans 1–10 (MAPPAKRARR). Disordered stretches follow at residues 1–38 (MAPPAKRARRGLVPPGYKYLGPGNSLDQGEPTNPSDAA) and 95–184 (VLTD…VGIS). The Nuclear localization signal signature appears at 4 to 13 (PAKRARRGLV). The interval 19 to 64 (YLGPGNSLDQGEPTNPSDAAAKEHDEAYAAYLRSGKNPYLYFSPAD) is phospholipase A2-like. The span at 25–35 (SLDQGEPTNPS) shows a compositional bias: polar residues. A compositionally biased stretch (gly residues) spans 166–183 (SGNGSGGGGGGGSGGVGI). A Mg(2+)-binding site is contributed by Asn323. Residues 507–536 (AQTDENQAADGDPRYAFGRQHGQKTTTTGE) are disordered. Cys633 and Cys637 are oxidised to a cystine.

The protein belongs to the parvoviridae capsid protein family. In terms of assembly, interacts with host TFRC.

Its subcellular location is the virion. The protein resides in the host nucleus. Capsid protein self-assembles to form an icosahedral capsid with a T=1 symmetry, about 22 nm in diameter, and consisting of 60 copies of two size variants of the capsid proteins, VP1 and VP2, which differ by the presence of an N-terminal extension in the minor protein VP1. The capsid encapsulates the genomic ssDNA. Capsid proteins are responsible for the attachment to host cell receptor TFRC. This attachment induces virion internalization predominantly through clathrin-dependent endocytosis. Binding to the host receptors also induces capsid rearrangements leading to surface exposure of VP1 N-terminus. The sequence is that of Capsid protein VP1 from Feline panleukopenia virus (FPV).